The sequence spans 424 residues: tRNA (guanine-N(7)-)-methyltransferase non-catalytic subunit wuho (424 aa).

Positions 42–92 (LKGHTSQSQESCTAAAAASTATAASGQAPGGKEQQLANQPEEGGTSASASG) are disordered. Residues 46–68 (TSQSQESCTAAAAASTATAASGQ) are compositionally biased toward low complexity. WD repeat units lie at residues 96 to 137 (ATST…ARLL), 184 to 223 (GHLSVVYDILWSEDQQHIITCDRDDKIRVTNYPATFDIHS), 227 to 265 (GHREFVSGLALLTEQHIASASGDKTLRVWNYIQGKELLQ), and 324 to 364 (AGSW…PASS).

This sequence belongs to the WD repeat TRM82 family. As to quaternary structure, forms a heterodimer with the catalytic subunit Mettl1. Interacts with mei-P26 and weakly interacts with bgcn; required for the function or formation of the mei-P26-bgcn-bam-sxl complex. Interacts with nanos; may be involved in mei-P26-dependent derepression of the BMP signaling pathway. Interacts with Myc; the interaction may be mediated by mei-P26 and may be involved in the regulation of ribosome biogenesis. As to expression, in testis, it is present at high level in hub cells, a niche for germline stem cells of testis. Ubiquitously expressed in all testicular cells throughout spermatogenesis. Ubiquitously expressed in all germline and somatic cells of the ovary.

The protein resides in the nucleus. The protein localises to the cytoplasm. Its pathway is tRNA modification; N(7)-methylguanine-tRNA biosynthesis. In terms of biological role, required for the Mettl1-dependent formation of N(7)-methylguanine at position 46 (m7G46) in tRNA. In the Mettl1-wuho methyltransferase complex, it is required to stabilize and induce conformational changes of the catalytic subunit. Required for binding of nanos mRNA and repression of translation by the mei-P26-bgcn-bam-sxl complex. May cooperate with mei-P26 and nanos to derepress the BMP signaling pathway. May cooperate with mei-P26 to suppress expression of a subset of microRNAs. May cooperate with mei-P26 to regulate bam expression levels in germline cells during gametogenesis. Required to promote mitosis to meiosis transition during gametogenesis. May regulate germline cell division in part by regulating ribosome biogenesis. This chain is tRNA (guanine-N(7)-)-methyltransferase non-catalytic subunit wuho, found in Drosophila melanogaster (Fruit fly).